A 1183-amino-acid chain; its full sequence is DNA-directed RNA polymerase subunit beta (1183 aa).

The segment at 1155 to 1183 (ADVDEDDVNEHKVNIQQSSIPESQKETTD) is disordered.

This sequence belongs to the RNA polymerase beta chain family. As to quaternary structure, the RNAP catalytic core consists of 2 alpha, 1 beta, 1 beta' and 1 omega subunit. When a sigma factor is associated with the core the holoenzyme is formed, which can initiate transcription.

It catalyses the reaction RNA(n) + a ribonucleoside 5'-triphosphate = RNA(n+1) + diphosphate. In terms of biological role, DNA-dependent RNA polymerase catalyzes the transcription of DNA into RNA using the four ribonucleoside triphosphates as substrates. The sequence is that of DNA-directed RNA polymerase subunit beta from Staphylococcus carnosus (strain TM300).